The sequence spans 116 residues: MAGRSGDSDEELLRTVRLIKLLYQSNPPPSPEGTRQARRNRRRRWRERQRQIRSISGWILSTYLGRSAEPVPLQLPPLERLTLDCSEDCGNSGAQGVGSPQILVESPAVLDSGTKE.

Phosphoserine; by host CK2 is present on residues Ser-5 and Ser-8. Residues Leu-18–Asn-26 are homomultimerization. The tract at residues Tyr-23 to Arg-48 is disordered. The Nuclear localization signal and RNA-binding (RRE) signature appears at Thr-34–Arg-50. Positions Gln-36 to Glu-47 are enriched in basic residues. The Nuclear export signal and binding to XPO1 signature appears at Leu-73–Asp-84. Residues Gly-90 to Glu-116 are disordered. Residues Ser-92 and Ser-99 each carry the phosphoserine; by host modification.

Belongs to the HIV-1 REV protein family. In terms of assembly, homomultimer; when bound to the RRE. Multimeric assembly is essential for activity and may involve XPO1. Binds to human KPNB1, XPO1, TNPO1, RANBP5 and IPO7. Interacts with the viral Integrase. Interacts with human KHDRBS1. Interacts with human NAP1; this interaction decreases Rev multimerization and stimulates its activity. Interacts with human DEAD-box helicases DDX3 and DDX24; these interactions may serve for viral RNA export to the cytoplasm and packaging, respectively. Interacts with human PSIP1; this interaction may inhibit HIV-1 DNA integration by promoting dissociation of the Integrase-LEDGF/p75 complex. Asymmetrically arginine dimethylated at one site by host PRMT6. Methylation impairs the RNA-binding activity and export of viral RNA from the nucleus to the cytoplasm. Post-translationally, phosphorylated by protein kinase CK2. Presence of, and maybe binding to the N-terminus of the regulatory beta subunit of CK2 is necessary for CK2-mediated Rev's phosphorylation.

Its subcellular location is the host nucleus. It localises to the host nucleolus. It is found in the host cytoplasm. In terms of biological role, escorts unspliced or incompletely spliced viral pre-mRNAs (late transcripts) out of the nucleus of infected cells. These pre-mRNAs carry a recognition sequence called Rev responsive element (RRE) located in the env gene, that is not present in fully spliced viral mRNAs (early transcripts). This function is essential since most viral proteins are translated from unspliced or partially spliced pre-mRNAs which cannot exit the nucleus by the pathway used by fully processed cellular mRNAs. Rev itself is translated from a fully spliced mRNA that readily exits the nucleus. Rev's nuclear localization signal (NLS) binds directly to KPNB1/Importin beta-1 without previous binding to KPNA1/Importin alpha-1. KPNB1 binds to the GDP bound form of RAN (Ran-GDP) and targets Rev to the nucleus. In the nucleus, the conversion from Ran-GDP to Ran-GTP dissociates Rev from KPNB1 and allows Rev's binding to the RRE in viral pre-mRNAs. Rev multimerization on the RRE via cooperative assembly exposes its nuclear export signal (NES) to the surface. Rev can then form a complex with XPO1/CRM1 and Ran-GTP, leading to nuclear export of the complex. Conversion from Ran-GTP to Ran-GDP mediates dissociation of the Rev/RRE/XPO1/RAN complex, so that Rev can return to the nucleus for a subsequent round of export. Beside KPNB1, also seems to interact with TNPO1/Transportin-1, RANBP5/IPO5 and IPO7/RANBP7 for nuclear import. The nucleoporin-like HRB/RIP is an essential cofactor that probably indirectly interacts with Rev to release HIV RNAs from the perinuclear region to the cytoplasm. This chain is Protein Rev, found in Homo sapiens (Human).